We begin with the raw amino-acid sequence, 276 residues long: NADPH-dependent 7-cyano-7-deazaguanine reductase (276 aa).

Position 80–82 (80–82) interacts with substrate; sequence VES. 82–83 lines the NADPH pocket; that stretch reads SK. Residue Cys-183 is the Thioimide intermediate of the active site. The active-site Proton donor is Asp-190. 222–223 provides a ligand contact to substrate; sequence HE. 251–252 contributes to the NADPH binding site; the sequence is RG.

This sequence belongs to the GTP cyclohydrolase I family. QueF type 2 subfamily. Homodimer.

It is found in the cytoplasm. It carries out the reaction 7-aminomethyl-7-carbaguanine + 2 NADP(+) = 7-cyano-7-deazaguanine + 2 NADPH + 3 H(+). Its pathway is tRNA modification; tRNA-queuosine biosynthesis. Functionally, catalyzes the NADPH-dependent reduction of 7-cyano-7-deazaguanine (preQ0) to 7-aminomethyl-7-deazaguanine (preQ1). In Burkholderia cenocepacia (strain HI2424), this protein is NADPH-dependent 7-cyano-7-deazaguanine reductase.